The sequence spans 122 residues: Large ribosomal subunit protein bL12 (122 aa).

Belongs to the bacterial ribosomal protein bL12 family. In terms of assembly, homodimer. Part of the ribosomal stalk of the 50S ribosomal subunit. Forms a multimeric L10(L12)X complex, where L10 forms an elongated spine to which 2 to 4 L12 dimers bind in a sequential fashion. Binds GTP-bound translation factors.

Its function is as follows. Forms part of the ribosomal stalk which helps the ribosome interact with GTP-bound translation factors. Is thus essential for accurate translation. This chain is Large ribosomal subunit protein bL12, found in Pseudomonas aeruginosa (strain LESB58).